Here is a 474-residue protein sequence, read N- to C-terminus: tRNA-2-methylthio-N(6)-dimethylallyladenosine synthase (474 aa).

The MTTase N-terminal domain occupies 3–120 (KKLHIKTWGC…LPEMIDQIRD (118 aa)). The [4Fe-4S] cluster site is built by C12, C49, C83, C157, C161, and C164. The region spanning 143-375 (RADGPSAFVS…QDRITQQAMR (233 aa)) is the Radical SAM core domain. A TRAM domain is found at 378–441 (RQMLGTVQRI…TNSLRGTFVR (64 aa)).

The protein belongs to the methylthiotransferase family. MiaB subfamily. As to quaternary structure, monomer. It depends on [4Fe-4S] cluster as a cofactor.

The protein localises to the cytoplasm. It carries out the reaction N(6)-dimethylallyladenosine(37) in tRNA + (sulfur carrier)-SH + AH2 + 2 S-adenosyl-L-methionine = 2-methylsulfanyl-N(6)-dimethylallyladenosine(37) in tRNA + (sulfur carrier)-H + 5'-deoxyadenosine + L-methionine + A + S-adenosyl-L-homocysteine + 2 H(+). Functionally, catalyzes the methylthiolation of N6-(dimethylallyl)adenosine (i(6)A), leading to the formation of 2-methylthio-N6-(dimethylallyl)adenosine (ms(2)i(6)A) at position 37 in tRNAs that read codons beginning with uridine. The chain is tRNA-2-methylthio-N(6)-dimethylallyladenosine synthase from Shewanella sediminis (strain HAW-EB3).